Here is a 452-residue protein sequence, read N- to C-terminus: DNA primase DnaG (452 aa).

The 77-residue stretch at 172 to 248 (DTVIIVEGRA…DIDYIARAPP (77 aa)) folds into the Toprim domain. Mg(2+) contacts are provided by E178, D222, and D224. The interval 289–320 (KKQIEQAQVQPSAAPTSPQPQPESTQPTQPIQ) is disordered. Residues 294-320 (QAQVQPSAAPTSPQPQPESTQPTQPIQ) are compositionally biased toward low complexity.

It belongs to the archaeal DnaG primase family. As to quaternary structure, forms a ternary complex with MCM helicase and DNA. Component of the archaeal exosome complex. Mg(2+) is required as a cofactor.

It catalyses the reaction ssDNA + n NTP = ssDNA/pppN(pN)n-1 hybrid + (n-1) diphosphate.. In terms of biological role, RNA polymerase that catalyzes the synthesis of short RNA molecules used as primers for DNA polymerase during DNA replication. Also part of the exosome, which is a complex involved in RNA degradation. Acts as a poly(A)-binding protein that enhances the interaction between heteromeric, adenine-rich transcripts and the exosome. This chain is DNA primase DnaG, found in Caldivirga maquilingensis (strain ATCC 700844 / DSM 13496 / JCM 10307 / IC-167).